A 174-amino-acid chain; its full sequence is Transcription antitermination protein NusB (174 aa).

Polar residues predominate over residues 1 to 11; it reads MSEVETTNDQT. The tract at residues 1 to 29 is disordered; it reads MSEVETTNDQTPAPKRKDKKPSRSQLRSA.

This sequence belongs to the NusB family.

Functionally, involved in transcription antitermination. Required for transcription of ribosomal RNA (rRNA) genes. Binds specifically to the boxA antiterminator sequence of the ribosomal RNA (rrn) operons. In Marinomonas sp. (strain MWYL1), this protein is Transcription antitermination protein NusB.